We begin with the raw amino-acid sequence, 339 residues long: UDP-3-O-acylglucosamine N-acyltransferase (339 aa).

His-248 acts as the Proton acceptor in catalysis.

This sequence belongs to the transferase hexapeptide repeat family. LpxD subfamily. As to quaternary structure, homotrimer.

The enzyme catalyses a UDP-3-O-[(3R)-3-hydroxyacyl]-alpha-D-glucosamine + a (3R)-hydroxyacyl-[ACP] = a UDP-2-N,3-O-bis[(3R)-3-hydroxyacyl]-alpha-D-glucosamine + holo-[ACP] + H(+). The protein operates within bacterial outer membrane biogenesis; LPS lipid A biosynthesis. Its function is as follows. Catalyzes the N-acylation of UDP-3-O-acylglucosamine using 3-hydroxyacyl-ACP as the acyl donor. Is involved in the biosynthesis of lipid A, a phosphorylated glycolipid that anchors the lipopolysaccharide to the outer membrane of the cell. This is UDP-3-O-acylglucosamine N-acyltransferase from Caulobacter vibrioides (strain NA1000 / CB15N) (Caulobacter crescentus).